The chain runs to 301 residues: Sulfate adenylyltransferase subunit 2 2 (301 aa).

It belongs to the PAPS reductase family. CysD subfamily. Heterodimer composed of CysD, the smaller subunit, and CysN.

It carries out the reaction sulfate + ATP + H(+) = adenosine 5'-phosphosulfate + diphosphate. It participates in sulfur metabolism; hydrogen sulfide biosynthesis; sulfite from sulfate: step 1/3. Its function is as follows. With CysN forms the ATP sulfurylase (ATPS) that catalyzes the adenylation of sulfate producing adenosine 5'-phosphosulfate (APS) and diphosphate, the first enzymatic step in sulfur assimilation pathway. APS synthesis involves the formation of a high-energy phosphoric-sulfuric acid anhydride bond driven by GTP hydrolysis by CysN coupled to ATP hydrolysis by CysD. In Shewanella sediminis (strain HAW-EB3), this protein is Sulfate adenylyltransferase subunit 2 2.